Consider the following 271-residue polypeptide: Glutamate racemase (271 aa).

Residues 13–14 (DS) and 45–46 (YG) each bind substrate. Cys-77 acts as the Proton donor/acceptor in catalysis. Residue 78–79 (NT) coordinates substrate. The active-site Proton donor/acceptor is the Cys-192. 193 to 194 (TH) provides a ligand contact to substrate.

This sequence belongs to the aspartate/glutamate racemases family.

The enzyme catalyses L-glutamate = D-glutamate. It participates in cell wall biogenesis; peptidoglycan biosynthesis. Provides the (R)-glutamate required for cell wall biosynthesis. In Sinorhizobium medicae (strain WSM419) (Ensifer medicae), this protein is Glutamate racemase.